A 304-amino-acid polypeptide reads, in one-letter code: Ribonuclease Z (304 aa).

Zn(2+)-binding residues include histidine 61, histidine 63, aspartate 65, histidine 66, histidine 138, aspartate 206, and histidine 265. Aspartate 65 (proton acceptor) is an active-site residue.

It belongs to the RNase Z family. As to quaternary structure, homodimer. Requires Zn(2+) as cofactor.

It carries out the reaction Endonucleolytic cleavage of RNA, removing extra 3' nucleotides from tRNA precursor, generating 3' termini of tRNAs. A 3'-hydroxy group is left at the tRNA terminus and a 5'-phosphoryl group is left at the trailer molecule.. Its function is as follows. Zinc phosphodiesterase, which displays some tRNA 3'-processing endonuclease activity. Probably involved in tRNA maturation, by removing a 3'-trailer from precursor tRNA. This Lachnospira eligens (strain ATCC 27750 / DSM 3376 / VPI C15-48 / C15-B4) (Eubacterium eligens) protein is Ribonuclease Z.